The following is a 245-amino-acid chain: Orotidine 5'-phosphate decarboxylase (245 aa).

Residues aspartate 22, lysine 44, 71 to 80 (DLKFHDIPNT), threonine 131, arginine 192, glutamine 201, glycine 221, and arginine 222 contribute to the substrate site. The active-site Proton donor is lysine 73.

Belongs to the OMP decarboxylase family. Type 1 subfamily. Homodimer.

The catalysed reaction is orotidine 5'-phosphate + H(+) = UMP + CO2. Its pathway is pyrimidine metabolism; UMP biosynthesis via de novo pathway; UMP from orotate: step 2/2. Functionally, catalyzes the decarboxylation of orotidine 5'-monophosphate (OMP) to uridine 5'-monophosphate (UMP). The chain is Orotidine 5'-phosphate decarboxylase from Escherichia coli O157:H7.